Consider the following 90-residue polypeptide: Envelope glycoprotein N (90 aa).

Positions 1–21 are cleaved as a signal peptide; it reads MTWKLFICFLSFGVIFLRVSS. Residues 22 to 55 lie on the Virion surface side of the membrane; it reads LTEKSHTTSYTILHNNNFYSNSCSADTYVPSIKT. A helical transmembrane segment spans residues 56–76; the sequence is FSSVWAILNVIIFFCASLFYL. At 77–90 the chain is on the intravirion side; the sequence is RHLCIVKFISNLTK.

The protein belongs to the herpesviridae glycoprotein N family. In terms of assembly, interacts (via N-terminus) with gM (via N-terminus). The gM-gN heterodimer forms the gCII complex.

The protein resides in the virion membrane. It is found in the host membrane. The protein localises to the host Golgi apparatus. It localises to the host trans-Golgi network. In terms of biological role, envelope glycoprotein necessary for proper maturation of gM and modulation of its membrane fusion activity. Also plays a critical role in virion morphogenesis. This is Envelope glycoprotein N from Saimiriine herpesvirus 2 (strain 11) (SaHV-2).